The chain runs to 351 residues: Transmembrane protein 255A (351 aa).

4 helical membrane-spanning segments follow: residues isoleucine 30–alanine 50, valine 57–isoleucine 77, leucine 89–valine 109, and threonine 226–phenylalanine 246. The interval phenylalanine 302–alanine 331 is disordered.

The protein belongs to the TMEM255 family.

It localises to the membrane. The protein is Transmembrane protein 255A (Tmem255a) of Rattus norvegicus (Rat).